A 346-amino-acid chain; its full sequence is MFEQLDQIEKEAAAALASVQSLDDLAAWRTQWTGKKGALAQASQSIGKLDPKDRPAFGQRFGAIKQALSEQETTLEARLQSAALHQELEEDAVDISLPGRAANIGRLHPSTQSLRRIQHIFAEMGFQVWESREVESDEYNFELLNMPAHHPARDMWDTFYVQSDDPHQKVVLRTHTSPGQIHVMRTLNPEPIRVILPGKCYRYEPVSARSEMMFHQVEGLVIGKNITMADLKGTLANFARRMFKDDVKVRYRPSYFPFTEPSVEVDIECFICGGEGCRICKKSGWLEILGAGMVHPTVLRNGGYDPAEWSGFAFGMGPERQTMLRYDIDDIRWFFSNDGRFLEQFG.

E260 lines the Mg(2+) pocket.

It belongs to the class-II aminoacyl-tRNA synthetase family. Phe-tRNA synthetase alpha subunit type 1 subfamily. In terms of assembly, tetramer of two alpha and two beta subunits. The cofactor is Mg(2+).

The protein localises to the cytoplasm. It catalyses the reaction tRNA(Phe) + L-phenylalanine + ATP = L-phenylalanyl-tRNA(Phe) + AMP + diphosphate + H(+). This Herpetosiphon aurantiacus (strain ATCC 23779 / DSM 785 / 114-95) protein is Phenylalanine--tRNA ligase alpha subunit.